We begin with the raw amino-acid sequence, 442 residues long: O-methyltransferase pgmB (442 aa).

Asp-291 serves as a coordination point for S-adenosyl-L-methionine. His-341 functions as the Proton acceptor in the catalytic mechanism.

It belongs to the class I-like SAM-binding methyltransferase superfamily. Cation-independent O-methyltransferase family.

It participates in pigment biosynthesis. Its pathway is secondary metabolite biosynthesis. Its function is as follows. O-methyltransferase; part of the gene cluster that mediates the biosynthesis of pleosporalin A, ascomycone A, as well as a third cryptic naphthoquinone derived pigment, all responsible for the coloration of conidia. Specifically methylates position C-6 of the pgmA product 3-acetonyl-1,6,8-trihydroxy-2-naphthaldehyde to yield fusarubinaldehyde. The pathway begins with the biosynthesis of the cyclized heptaketide 3-acetonyl-1,6,8-trihydroxy-2-naphthaldehyde by the NR-PKS pgmA. The C-6 hydroxyl group is further methylated by the O-methyltransferase pgmB to yield fusarubinaldehyde which is in turn oxidized by the cytochrome P450 monooxygenase pgmC at C-9. The C-1 hydroxyl group is then methylated spontaneously. Although pgmE, pgmD and pgmH are essential for the production of pleosporalin A, it is not the case for the 2 other final products and it remains difficult to assign a specific function to each enzyme. PgmF and pgmG seem not to be involved in pigment biosynthesis although they were regulated by the cluster-specific transcription factor pgmR. This Aspergillus terreus protein is O-methyltransferase pgmB.